A 129-amino-acid polypeptide reads, in one-letter code: Protein BEX2 (129 aa).

The interval M1–I37 is disordered. Over residues E15–P36 the composition is skewed to basic and acidic residues. R51 bears the Omega-N-methylarginine mark. A his cluster region spans residues H118–H122. Residue C126 coordinates Zn(2+).

The protein belongs to the BEX family. Interacts with LMO2, possibly leading to regulate the transcriptional activity of a DNA-binding complex containing LMO2. Interacts with OMP. Primarily localized to neuronal cells within several regions of the brain, including the olfactory epithelium, bulb, peri/paraventricular nuclei, suprachiasmatic nucleus, arcuate nucleus, median eminence, lateral hypothalamic area, thalamus, hippocampus and cerebellum (at protein level).

Its subcellular location is the cytoplasm. It is found in the nucleus. Its function is as follows. Regulator of mitochondrial apoptosis and G1 cell cycle. Regulates the level of PP2A regulatory subunit B and PP2A phosphatase activity. In absence of reductive stress, acts as a pseudosubstrate for the CRL2(FEM1B) complex: associates with FEM1B via zinc, thereby preventing association between FEM1B and its substrates. In Mus musculus (Mouse), this protein is Protein BEX2.